The primary structure comprises 323 residues: o-succinylbenzoate synthase (323 aa).

Lysine 134 serves as the catalytic Proton donor. 3 residues coordinate Mg(2+): aspartate 162, glutamate 191, and aspartate 214. Lysine 236 (proton acceptor) is an active-site residue.

The protein belongs to the mandelate racemase/muconate lactonizing enzyme family. MenC type 1 subfamily. It depends on a divalent metal cation as a cofactor.

The catalysed reaction is (1R,6R)-6-hydroxy-2-succinyl-cyclohexa-2,4-diene-1-carboxylate = 2-succinylbenzoate + H2O. The protein operates within quinol/quinone metabolism; 1,4-dihydroxy-2-naphthoate biosynthesis; 1,4-dihydroxy-2-naphthoate from chorismate: step 4/7. Its pathway is quinol/quinone metabolism; menaquinone biosynthesis. In terms of biological role, converts 2-succinyl-6-hydroxy-2,4-cyclohexadiene-1-carboxylate (SHCHC) to 2-succinylbenzoate (OSB). The sequence is that of o-succinylbenzoate synthase from Yersinia pseudotuberculosis serotype I (strain IP32953).